Reading from the N-terminus, the 180-residue chain is Acireductone dioxygenase (180 aa).

Fe(2+)-binding residues include His97, His99, Glu103, and His141. Ni(2+) is bound by residues His97, His99, Glu103, and His141.

This sequence belongs to the acireductone dioxygenase (ARD) family. As to quaternary structure, monomer. Fe(2+) serves as cofactor. Requires Ni(2+) as cofactor.

The catalysed reaction is 1,2-dihydroxy-5-(methylsulfanyl)pent-1-en-3-one + O2 = 3-(methylsulfanyl)propanoate + CO + formate + 2 H(+). It catalyses the reaction 1,2-dihydroxy-5-(methylsulfanyl)pent-1-en-3-one + O2 = 4-methylsulfanyl-2-oxobutanoate + formate + 2 H(+). It functions in the pathway amino-acid biosynthesis; L-methionine biosynthesis via salvage pathway; L-methionine from S-methyl-5-thio-alpha-D-ribose 1-phosphate: step 5/6. Catalyzes 2 different reactions between oxygen and the acireductone 1,2-dihydroxy-3-keto-5-methylthiopentene (DHK-MTPene) depending upon the metal bound in the active site. Fe-containing acireductone dioxygenase (Fe-ARD) produces formate and 2-keto-4-methylthiobutyrate (KMTB), the alpha-ketoacid precursor of methionine in the methionine recycle pathway. Ni-containing acireductone dioxygenase (Ni-ARD) produces methylthiopropionate, carbon monoxide and formate, and does not lie on the methionine recycle pathway. The protein is Acireductone dioxygenase of Enterobacter sp. (strain 638).